A 325-amino-acid chain; its full sequence is Exogastrula-inducing polypeptide (325 aa).

The first 19 residues, 1–19, serve as a signal peptide directing secretion; sequence MKVSLVLLIAVFGLAMVAA. Positions 20–45 are excised as a propeptide; sequence EETLESKLQMALKSLLQENEELNLEG. 2 EGF-like domains span residues 48–91 and 107–154; these read TKGG…SSCY and TVAR…GGCS. Disulfide bonds link Cys52/Cys65, Cys59/Cys75, Cys77/Cys90, Cys111/Cys124, Cys118/Cys138, and Cys140/Cys153. A propeptide spanning residues 160–177 is cleaved from the precursor; it reads ELEYLSYVARDVEMEMLA. The EGF-like 3 domain maps to 180–226; that stretch reads SVYQCNRDTNSCDGFGKCEKSTFGRTTGQYICNCDDGYRNNAYGGCS. Cystine bridges form between Cys184/Cys197, Cys191/Cys211, and Cys213/Cys225. The propeptide occupies 232-249; the sequence is EIEYLSMIARDQELEMQA. The EGF-like 4 domain occupies 252 to 298; sequence SLPQCNRDTNYCDGFGQCVKSTFGRTTGQYICSCNDGYENNLYGGCS. 3 disulfide bridges follow: Cys256-Cys269, Cys263-Cys283, and Cys285-Cys297. Residues 313–325 constitute a propeptide that is removed on maturation; that stretch reads MEILRSLANLLEE.

The protein resides in the secreted. It is found in the extracellular space. Its subcellular location is the extracellular matrix. Its function is as follows. The EGIP peptides are factors effective to extrude the archenteron toward outside of embryos. May have a role in the induction of gastrulation. The polypeptide is Exogastrula-inducing polypeptide (Heliocidaris crassispina (Sea urchin)).